Reading from the N-terminus, the 328-residue chain is Alanine racemase (328 aa).

K33 serves as the catalytic Proton acceptor; specific for D-alanine. Residue K33 is modified to N6-(pyridoxal phosphate)lysine. Residue R118 participates in substrate binding. Catalysis depends on Y237, which acts as the Proton acceptor; specific for L-alanine. M283 contacts substrate.

Belongs to the alanine racemase family. Pyridoxal 5'-phosphate serves as cofactor.

It carries out the reaction L-alanine = D-alanine. It participates in amino-acid biosynthesis; D-alanine biosynthesis; D-alanine from L-alanine: step 1/1. In terms of biological role, catalyzes the interconversion of L-alanine and D-alanine. May also act on other amino acids. The sequence is that of Alanine racemase (alr) from Campylobacter jejuni subsp. doylei (strain ATCC BAA-1458 / RM4099 / 269.97).